Consider the following 116-residue polypeptide: Protein BIC2 (116 aa).

Disordered stretches follow at residues 1-33 and 95-116; these read MKNTNLPEETKEPISPGSSHRKQNKTGTKTCFP and DSGDDAGARGSRPQRLRVESSC.

It is found in the nucleus. Regulates the blue-light dependent dimerization of CRY2 and formation of photobodies. Inhibits CRY phosphorylation. The sequence is that of Protein BIC2 from Arabidopsis thaliana (Mouse-ear cress).